Reading from the N-terminus, the 390-residue chain is Leu/Ile/Val-binding protein homolog 6 (390 aa).

The N-terminal stretch at 1–21 (MKKIALTALAVFSLAASAAYA) is a signal peptide.

This sequence belongs to the leucine-binding protein family.

In terms of biological role, component of an amino-acid transport system. This is Leu/Ile/Val-binding protein homolog 6 from Brucella suis biovar 1 (strain 1330).